The sequence spans 461 residues: Argininosuccinate lyase (461 aa).

It belongs to the lyase 1 family. Argininosuccinate lyase subfamily.

The protein localises to the cytoplasm. It catalyses the reaction 2-(N(omega)-L-arginino)succinate = fumarate + L-arginine. The protein operates within amino-acid biosynthesis; L-arginine biosynthesis; L-arginine from L-ornithine and carbamoyl phosphate: step 3/3. The sequence is that of Argininosuccinate lyase from Limosilactobacillus reuteri subsp. reuteri (strain JCM 1112) (Lactobacillus reuteri).